Consider the following 169-residue polypeptide: Disulfide bond formation protein B 1 (169 aa).

Topologically, residues 1 to 14 (MSDNTLYLRREKRF) are cytoplasmic. The chain crosses the membrane as a helical span at residues 15 to 31 (LVLLGIICLALIGGALY). The Periplasmic portion of the chain corresponds to 32–49 (MQVVLDEAPCPLCILQRY). Cysteines 41 and 44 form a disulfide. The chain crosses the membrane as a helical span at residues 50–65 (ALLFIAIFAFIGAAMP). Over 66–72 (GRRSVTA) the chain is Cytoplasmic. The chain crosses the membrane as a helical span at residues 73 to 89 (FETLVTLSALGGIAAAG). Topologically, residues 90-144 (RHVWILAHPSDSCGIDVLQPIVDGLPLATLFPTGFQVSGFCTTPYPPVLGLSLAQ) are periplasmic. A disulfide bond links C102 and C130. A helical membrane pass occupies residues 145–163 (WALTAFVLTAVLVPACIIR). Residues 164–169 (NRRKPY) lie on the Cytoplasmic side of the membrane.

The protein belongs to the DsbB family.

Its subcellular location is the cell inner membrane. In terms of biological role, required for disulfide bond formation in some periplasmic proteins. Acts by oxidizing the DsbA protein. The protein is Disulfide bond formation protein B 1 of Pseudomonas syringae pv. syringae (strain B728a).